The primary structure comprises 124 residues: Ribonuclease pancreatic (124 aa).

The segment covering 1-13 (KESAAAKFERQHM) has biased composition (basic and acidic residues). Residues 1 to 24 (KESAAAKFERQHMDPSMSSASSSN) are disordered. Substrate-binding residues include Lys7 and Arg10. The Proton acceptor role is filled by His12. 4 disulfides stabilise this stretch: Cys26-Cys84, Cys40-Cys95, Cys58-Cys110, and Cys65-Cys72. Substrate is bound by residues 41-45 (KPVNT), Lys66, and Arg85. His119 functions as the Proton donor in the catalytic mechanism.

It belongs to the pancreatic ribonuclease family. Monomer. Interacts with and forms tight 1:1 complexes with RNH1. Dimerization of two such complexes may occur. Interaction with RNH1 inhibits this protein. In terms of tissue distribution, pancreas.

The protein resides in the secreted. It catalyses the reaction an [RNA] containing cytidine + H2O = an [RNA]-3'-cytidine-3'-phosphate + a 5'-hydroxy-ribonucleotide-3'-[RNA].. The catalysed reaction is an [RNA] containing uridine + H2O = an [RNA]-3'-uridine-3'-phosphate + a 5'-hydroxy-ribonucleotide-3'-[RNA].. Endonuclease that catalyzes the cleavage of RNA on the 3' side of pyrimidine nucleotides. Acts on single-stranded and double-stranded RNA. The polypeptide is Ribonuclease pancreatic (RNASE1) (Dama dama (Fallow deer)).